The chain runs to 422 residues: Serine--tRNA ligase (422 aa).

231-233 (TAE) is a binding site for L-serine. ATP is bound at residue 261 to 263 (RSE). Residue glutamate 284 participates in L-serine binding. ATP is bound at residue 348 to 351 (EISS). Serine 383 provides a ligand contact to L-serine.

The protein belongs to the class-II aminoacyl-tRNA synthetase family. Type-1 seryl-tRNA synthetase subfamily. Homodimer. The tRNA molecule binds across the dimer.

Its subcellular location is the cytoplasm. It catalyses the reaction tRNA(Ser) + L-serine + ATP = L-seryl-tRNA(Ser) + AMP + diphosphate + H(+). The catalysed reaction is tRNA(Sec) + L-serine + ATP = L-seryl-tRNA(Sec) + AMP + diphosphate + H(+). It functions in the pathway aminoacyl-tRNA biosynthesis; selenocysteinyl-tRNA(Sec) biosynthesis; L-seryl-tRNA(Sec) from L-serine and tRNA(Sec): step 1/1. Functionally, catalyzes the attachment of serine to tRNA(Ser). Is also able to aminoacylate tRNA(Sec) with serine, to form the misacylated tRNA L-seryl-tRNA(Sec), which will be further converted into selenocysteinyl-tRNA(Sec). The polypeptide is Serine--tRNA ligase (Mycoplasmopsis agalactiae (strain NCTC 10123 / CIP 59.7 / PG2) (Mycoplasma agalactiae)).